The following is a 561-amino-acid chain: Eukaryotic translation initiation factor 3 subunit D-1 (561 aa).

Residues 98 to 164 (VQKPPHQRGR…RGPPPKMRES (67 aa)) are disordered. The segment covering 100–121 (KPPHQRGRFRNMRNSRSGRGRN) has biased composition (basic residues). At threonine 128 the chain carries Phosphothreonine. The interval 289-303 (EFDLLTVNETSVEPP) is RNA gate.

The protein belongs to the eIF-3 subunit D family. Component of the eukaryotic translation initiation factor 3 (eIF-3) complex. The eIF-3 complex interacts with pix.

It is found in the cytoplasm. MRNA cap-binding component of the eukaryotic translation initiation factor 3 (eIF-3) complex, which is involved in protein synthesis of a specialized repertoire of mRNAs and, together with other initiation factors, stimulates binding of mRNA and methionyl-tRNAi to the 40S ribosome. The eIF-3 complex specifically targets and initiates translation of a subset of mRNAs involved in cell proliferation. In the eIF-3 complex, eif3d specifically recognizes and binds the 7-methylguanosine cap of a subset of mRNAs. This is Eukaryotic translation initiation factor 3 subunit D-1 from Drosophila ananassae (Fruit fly).